Reading from the N-terminus, the 295-residue chain is MSNPYQNSQNGYQQNNSYELNNYPNKQYSSSNEDDFVQFMNEIQDINSQLDNYSNIINLIDNKQKNFLHGLDLNDEDTDYDSKQIENLVNEAQSLQLDLKNRIKNVQTQAVHSRDQTKVDQAETCRKRFLDLIQDYRLVEARNKESTKEQAARQYQIIKPDATDEEIKAVVEDGSQQYFQQALMQSNRRGEARSVLNEVQVRHRELLKLEKTMAELTQLFHDMEELVIEQDQPIQQIEEQVGTAQHDIEQGVGHTNKAVKSAKSARKKKLWCFFICLLIVIILAVILGAYFGTRK.

Low complexity predominate over residues 1 to 18 (MSNPYQNSQNGYQQNNSY). A disordered region spans residues 1 to 31 (MSNPYQNSQNGYQQNNSYELNNYPNKQYSSS). At 1–270 (MSNPYQNSQN…SAKSARKKKL (270 aa)) the chain is on the cytoplasmic side. A compositionally biased stretch (polar residues) spans 19–31 (ELNNYPNKQYSSS). Residues 33–110 (EDDFVQFMNE…NRIKNVQTQA (78 aa)) are a coiled coil. The t-SNARE coiled-coil homology domain maps to 196-258 (LNEVQVRHRE…EQGVGHTNKA (63 aa)). Residues 271–291 (WCFFICLLIVIILAVILGAYF) form a helical; Anchor for type IV membrane protein membrane-spanning segment. At 292–295 (GTRK) the chain is on the extracellular side.

The protein belongs to the syntaxin family.

Its subcellular location is the membrane. Functionally, late secretory t-SNARE protein required for secretion and proper cytokinesis. Plays an important role in the secretion of virulence-associated extracellular enzymes and vesicle-mediated polarized hyphal growth. The polypeptide is Protein transport protein SSO2 (SSO2) (Candida albicans (strain SC5314 / ATCC MYA-2876) (Yeast)).